Here is a 105-residue protein sequence, read N- to C-terminus: MYAIIKCGGKQYKVSEGDILDIDYTGKAAKETLEITDVLAINNGELKTGAAVANAKVEAVVVLDGTGVNRAKKVIIYKKRRRKDSKLKRGFRRSFTKVRITKIAA.

It belongs to the bacterial ribosomal protein bL21 family. As to quaternary structure, part of the 50S ribosomal subunit. Contacts protein L20.

This protein binds to 23S rRNA in the presence of protein L20. The protein is Large ribosomal subunit protein bL21 of Aliarcobacter butzleri (strain RM4018) (Arcobacter butzleri).